The following is a 146-amino-acid chain: 3-dehydroquinate dehydratase (146 aa).

The active-site Proton acceptor is the Tyr-22. The substrate site is built by Asn-74, His-80, and Asp-87. His-100 serves as the catalytic Proton donor. Substrate contacts are provided by residues 101–102 (LS) and Arg-111.

The protein belongs to the type-II 3-dehydroquinase family. In terms of assembly, homododecamer.

The catalysed reaction is 3-dehydroquinate = 3-dehydroshikimate + H2O. Its pathway is metabolic intermediate biosynthesis; chorismate biosynthesis; chorismate from D-erythrose 4-phosphate and phosphoenolpyruvate: step 3/7. Functionally, catalyzes a trans-dehydration via an enolate intermediate. The protein is 3-dehydroquinate dehydratase of Clostridium beijerinckii (strain ATCC 51743 / NCIMB 8052) (Clostridium acetobutylicum).